The chain runs to 468 residues: V-type proton ATPase subunit H (468 aa).

Belongs to the V-ATPase H subunit family. V-ATPase is a heteromultimeric enzyme made up of two complexes: the ATP-hydrolytic V1 complex and the proton translocation V0 complex. The V1 complex consists of three catalytic AB heterodimers that form a heterohexamer, three peripheral stalks each consisting of EG heterodimers, one central rotor including subunits D and F, and the regulatory subunits C and H. The proton translocation complex V0 consists of the proton transport subunit a, a ring of proteolipid subunits c9c'', rotary subunit d, subunits e and f, and the accessory subunits VhaAC45 and ATP6AP2.

Functionally, subunit of the V1 complex of vacuolar(H+)-ATPase (V-ATPase), a multisubunit enzyme composed of a peripheral complex (V1) that hydrolyzes ATP and a membrane integral complex (V0) that translocates protons. V-ATPase is responsible for acidifying and maintaining the pH of intracellular compartments and in some cell types, is targeted to the plasma membrane, where it is responsible for acidifying the extracellular environment. Subunit H is essential for V-ATPase activity, but not for the assembly of the complex. In Drosophila melanogaster (Fruit fly), this protein is V-type proton ATPase subunit H (VhaSFD).